We begin with the raw amino-acid sequence, 249 residues long: Sugar fermentation stimulation protein homolog (249 aa).

This sequence belongs to the SfsA family.

The sequence is that of Sugar fermentation stimulation protein homolog from Prochlorococcus marinus (strain MIT 9515).